A 193-amino-acid chain; its full sequence is dCTP deaminase (193 aa).

Residues 110-115, Asp128, 136-138, Tyr171, Lys178, and Gln182 contribute to the dCTP site; these read RSSLAR and VLE. Catalysis depends on Glu138, which acts as the Proton donor/acceptor.

Belongs to the dCTP deaminase family. Homotrimer.

It catalyses the reaction dCTP + H2O + H(+) = dUTP + NH4(+). It participates in pyrimidine metabolism; dUMP biosynthesis; dUMP from dCTP (dUTP route): step 1/2. In terms of biological role, catalyzes the deamination of dCTP to dUTP. The sequence is that of dCTP deaminase from Tolumonas auensis (strain DSM 9187 / NBRC 110442 / TA 4).